Consider the following 288-residue polypeptide: Quinate/shikimate dehydrogenase (288 aa).

Substrate-binding residues include Lys-71 and Asp-107. Residues 132–135 (AGGA), 155–158 (NRKD), Lys-205, 232–235 (CVYN), and Gly-255 each bind NAD(+).

It belongs to the shikimate dehydrogenase family. As to quaternary structure, homodimer.

It catalyses the reaction L-quinate + NAD(+) = 3-dehydroquinate + NADH + H(+). The enzyme catalyses L-quinate + NADP(+) = 3-dehydroquinate + NADPH + H(+). The catalysed reaction is shikimate + NADP(+) = 3-dehydroshikimate + NADPH + H(+). It carries out the reaction shikimate + NAD(+) = 3-dehydroshikimate + NADH + H(+). It participates in metabolic intermediate biosynthesis; chorismate biosynthesis; chorismate from D-erythrose 4-phosphate and phosphoenolpyruvate: step 4/7. Functionally, the actual biological function of YdiB remains unclear, nor is it known whether 3-dehydroshikimate or quinate represents the natural substrate. Catalyzes the reversible NAD-dependent reduction of both 3-dehydroshikimate (DHSA) and 3-dehydroquinate to yield shikimate (SA) and quinate, respectively. It can use both NAD or NADP for catalysis, however it has higher catalytic efficiency with NAD. The sequence is that of Quinate/shikimate dehydrogenase from Salmonella agona (strain SL483).